Consider the following 344-residue polypeptide: UDP-3-O-acylglucosamine N-acyltransferase (344 aa).

Catalysis depends on histidine 248, which acts as the Proton acceptor.

This sequence belongs to the transferase hexapeptide repeat family. LpxD subfamily. As to quaternary structure, homotrimer.

It catalyses the reaction a UDP-3-O-[(3R)-3-hydroxyacyl]-alpha-D-glucosamine + a (3R)-hydroxyacyl-[ACP] = a UDP-2-N,3-O-bis[(3R)-3-hydroxyacyl]-alpha-D-glucosamine + holo-[ACP] + H(+). It participates in bacterial outer membrane biogenesis; LPS lipid A biosynthesis. Catalyzes the N-acylation of UDP-3-O-acylglucosamine using 3-hydroxyacyl-ACP as the acyl donor. Is involved in the biosynthesis of lipid A, a phosphorylated glycolipid that anchors the lipopolysaccharide to the outer membrane of the cell. The chain is UDP-3-O-acylglucosamine N-acyltransferase from Synechocystis sp. (strain ATCC 27184 / PCC 6803 / Kazusa).